The following is a 991-amino-acid chain: Phosphate metabolism protein 7 (991 aa).

The Extracellular segment spans residues M1 to A9. Residues F10–L30 traverse the membrane as a helical segment. The Cytoplasmic portion of the chain corresponds to L31–R91. A helical membrane pass occupies residues Y92 to L112. The Extracellular segment spans residues P113 to R138. Residues N115 and N132 are each glycosylated (N-linked (GlcNAc...) asparagine). A helical transmembrane segment spans residues F139–K159. Over E160 to N388 the chain is Cytoplasmic. Residues T389–S409 form a helical membrane-spanning segment. Topologically, residues N410–G437 are extracellular. Residues L438–L458 form a helical membrane-spanning segment. Topologically, residues G459–D471 are cytoplasmic. Residues L472 to A492 traverse the membrane as a helical segment. The Extracellular portion of the chain corresponds to T493–N523. Residues F524–A544 form a helical membrane-spanning segment. Residues V545–G582 are Cytoplasmic-facing. Residues I583–F603 form a helical membrane-spanning segment. S604 is a topological domain (extracellular). Residues T605 to F625 form a helical membrane-spanning segment. At S626–A637 the chain is on the cytoplasmic side. The helical transmembrane segment at L638–M658 threads the bilayer. Topologically, residues A659–T661 are extracellular. Residues W662–M682 traverse the membrane as a helical segment. At K683 to K991 the chain is on the cytoplasmic side. The interval K749–S787 is disordered. Over residues D757 to S785 the composition is skewed to polar residues.

This sequence belongs to the CSC1 (TC 1.A.17) family.

The protein localises to the cell membrane. Acts as an osmosensitive calcium-permeable cation channel. This is Phosphate metabolism protein 7 (PHM7) from Saccharomyces cerevisiae (strain ATCC 204508 / S288c) (Baker's yeast).